Here is a 378-residue protein sequence, read N- to C-terminus: Poly(3-hydroxyalkanoate) polymerase subunit PhaC (378 aa).

The region spanning 84-356 (PVLIVYALVN…QSFPVGHIGM (273 aa)) is the AB hydrolase-1 domain.

Belongs to the PHA/PHB synthase family. Type III PhaC subfamily. Forms a heterodimer with PhaE, which may multimerize in the presence of 3-hydroxybutyryl-CoA. Both subunits are required for PHB synthesis in E.coli and in PHA-negative A.eutrophus.

The protein localises to the cytoplasm. The enzyme catalyses (3R)-3-hydroxybutanoyl-CoA + [(3R)-hydroxybutanoate](n) = [(3R)-hydroxybutanoate](n+1) + CoA. The protein operates within biopolymer metabolism; poly-(R)-3-hydroxybutanoate biosynthesis. When expressed in E.coli with Synechocystis PhaE and C.necator PhaA and PhaB, confers the ability to synthesize up to 13% (w/w) poly(3-hydroxybutyrate) (PHB) depending on the carbon source; all 4 genes are necessary for PHB production. Cell-free in vitro coexpression with PhaE gives a heterodimer able to polymerize 3-hydroxybutyrate-CoA. The chain is Poly(3-hydroxyalkanoate) polymerase subunit PhaC from Synechocystis sp. (strain ATCC 27184 / PCC 6803 / Kazusa).